A 274-amino-acid polypeptide reads, in one-letter code: Outer surface protein A (274 aa).

Positions 1 to 16 (MKKYLLGIGLILALIA) are cleaved as a signal peptide. Cysteine 17 is lipidated: N-palmitoyl cysteine. Cysteine 17 carries the S-diacylglycerol cysteine lipid modification.

It belongs to the OspA lipoprotein family.

It localises to the cell outer membrane. It is found in the cell surface. The chain is Outer surface protein A from Borreliella burgdorferi (Lyme disease spirochete).